A 168-amino-acid polypeptide reads, in one-letter code: RxLR effector protein CRE8 (168 aa).

The signal sequence occupies residues Met1 to Ala23. Positions Arg54–Arg69 match the RxLR-dEER motif.

It belongs to the RxLR effector family.

It is found in the secreted. The protein localises to the host cell. Its function is as follows. Effector that is involved in host plant infection. Contributes to virulence during the early infection stage, by inhibiting plant defense responses induced by both PAMP-triggered immunity (PTI) and effector-triggered immunity (ETI). The sequence is that of RxLR effector protein CRE8 from Phytophthora infestans (strain T30-4) (Potato late blight agent).